We begin with the raw amino-acid sequence, 618 residues long: Grainyhead-like protein 1 homolog (618 aa).

The tract at residues 1–91 (MTQEYDNKRP…EGEHPEPEHS (91 aa)) is transcription activation. The segment covering 76-92 (SSAVKPEGEHPEPEHSK) has biased composition (basic and acidic residues). The disordered stretch occupies residues 76 to 100 (SSAVKPEGEHPEPEHSKRNSIPNVT). Thr-208 carries the phosphothreonine modification. Residues 248 to 474 (SGNNFEYTLE…DLDTQPVLFI (227 aa)) enclose the Grh/CP2 DB domain. Interaction with DNA stretches follow at residues 380–389 (TDFSSQKGVK) and 427–430 (RKIR).

This sequence belongs to the grh/CP2 family. Grainyhead subfamily. In terms of assembly, binds DNA as homodimer. Homodimer, also forms heterodimers with GRHL2 or GRHL3. Post-translationally, methylation at Arg-9 and Lys-116 may be involved in regulating transcriptional activation. Isoform 1 is highly expressed in brain, pancreas, tonsil, placenta and kidney. Isoform 2 is highly expressed in brain and liver. Expression in the skin is confined to the suprabasal layers of the epidermis and to the hair follicles.

The protein resides in the nucleus. In terms of biological role, transcription factor involved in epithelial development. Binds directly to the consensus DNA sequence 5'-AACCGGTT-3'. Important regulator of DSG1 in the context of hair anchorage and epidermal differentiation, participates in the maintenance of the skin barrier. There is no genetic interaction with GRHL3, nor functional cooperativity due to diverse target gene selectivity during epithelia development. May play a role in regulating glucose homeostasis and insulin signaling. This Mus musculus (Mouse) protein is Grainyhead-like protein 1 homolog.